The primary structure comprises 494 residues: Vacuolar-processing enzyme (494 aa).

Positions 1 to 20 (MTRLASGVLITLLVALAGIA) are cleaved as a signal peptide. Residue Asn151 is glycosylated (N-linked (GlcNAc...) asparagine). His178 is an active-site residue. The Nucleophile role is filled by Cys220. Cys253 and Cys267 form a disulfide bridge. Asn336 carries an N-linked (GlcNAc...) asparagine glycan. Disulfide bonds link Cys430/Cys460 and Cys442/Cys477.

This sequence belongs to the peptidase C13 family. High levels are seen in the flowers, a lower level expression is seen in the leaves, while very low levels are seen in the stems and roots.

Asparagine-specific endopeptidase that may be involved in processing of proteins targeted to vacuoles that accumulate during ethylene-regulated processes such as flower opening and flavedo degreening. This is Vacuolar-processing enzyme from Citrus sinensis (Sweet orange).